Reading from the N-terminus, the 287-residue chain is Pyridoxal kinase PdxY (287 aa).

Substrate is bound by residues serine 10 and 45 to 46 (TQ). Residues aspartate 112, alanine 144, glutamate 149, lysine 182, and 209–212 (RPLV) contribute to the ATP site. Aspartate 224 is a substrate binding site.

Belongs to the pyridoxine kinase family. PdxY subfamily. As to quaternary structure, homodimer. The cofactor is Mg(2+).

It carries out the reaction pyridoxal + ATP = pyridoxal 5'-phosphate + ADP + H(+). It functions in the pathway cofactor metabolism; pyridoxal 5'-phosphate salvage; pyridoxal 5'-phosphate from pyridoxal: step 1/1. Functionally, pyridoxal kinase involved in the salvage pathway of pyridoxal 5'-phosphate (PLP). Catalyzes the phosphorylation of pyridoxal to PLP. In Shigella sonnei (strain Ss046), this protein is Pyridoxal kinase PdxY.